Here is a 317-residue protein sequence, read N- to C-terminus: uncharacterized protein (317 aa).

An N-terminal signal peptide occupies residues 1–16 (MKLSFILSTLVAGALA). N-linked (GlcNAc...) asparagine glycosylation occurs at N42. 2 stretches are compositionally biased toward low complexity: residues 150–238 (SSST…SSSS) and 247–259 (TAST…ASSA). The segment at 150–259 (SSSTPSSSSS…TDDSSSASSA (110 aa)) is disordered.

This is an uncharacterized protein from Schizosaccharomyces pombe (strain 972 / ATCC 24843) (Fission yeast).